Here is a 354-residue protein sequence, read N- to C-terminus: Uroporphyrinogen decarboxylase (354 aa).

Substrate is bound by residues Arg27 to Arg31, Asp77, Tyr154, Thr209, and His327.

It belongs to the uroporphyrinogen decarboxylase family. As to quaternary structure, homodimer.

Its subcellular location is the cytoplasm. It carries out the reaction uroporphyrinogen III + 4 H(+) = coproporphyrinogen III + 4 CO2. Its pathway is porphyrin-containing compound metabolism; protoporphyrin-IX biosynthesis; coproporphyrinogen-III from 5-aminolevulinate: step 4/4. In terms of biological role, catalyzes the decarboxylation of four acetate groups of uroporphyrinogen-III to yield coproporphyrinogen-III. The polypeptide is Uroporphyrinogen decarboxylase (Salmonella schwarzengrund (strain CVM19633)).